Consider the following 44-residue polypeptide: Protein PsbN (44 aa).

Residues 7-29 (FFTTFLGCLLLSITGYSIYVGFG) traverse the membrane as a helical segment.

It belongs to the PsbN family.

It is found in the plastid. It localises to the chloroplast thylakoid membrane. Functionally, may play a role in photosystem I and II biogenesis. The chain is Protein PsbN from Pleurastrum terricola (Filamentous green alga).